Here is an 88-residue protein sequence, read N- to C-terminus: U13-theraphotoxin-Cg1a (88 aa).

A signal peptide spans 1–21; it reads MKVSVLITLAVLGVMFVWASA. The propeptide occupies 22-52; sequence AELEQSGSDQKDSDSPAWLKSMERIFQSEER. 3 disulfides stabilise this stretch: C54–C68, C61–C73, and C67–C80.

It belongs to the neurotoxin 10 (Hwtx-1) family. 41 (Jztx-36) subfamily. In terms of tissue distribution, expressed by the venom gland.

It is found in the secreted. In terms of biological role, probable ion channel inhibitor. The polypeptide is U13-theraphotoxin-Cg1a (Chilobrachys guangxiensis (Chinese earth tiger tarantula)).